A 703-amino-acid chain; its full sequence is Protein teflon (703 aa).

The segment at 32–55 (MLCHFCKDIFTHLPEFMRHLQWSH) adopts a C2H2-type 1 zinc-finger fold. 4 disordered regions span residues 78-111 (SSEDDVQSQANSCSSGDSGLAGEMEDADGEPGSS), 140-161 (EQSYSKNPPDSRTEGFRCARKP), 205-239 (NDVSKPRLNKLRSKLNNSLSSNISGPPKQSKMPSL), and 339-434 (SQQP…SKLE). Over residues 84 to 94 (QSQANSCSSGD) the composition is skewed to polar residues. Over residues 148–161 (PDSRTEGFRCARKP) the composition is skewed to basic and acidic residues. 2 stretches are compositionally biased toward polar residues: residues 339–352 (SQQPSELNTTNNAV) and 364–373 (SLTVISSSPI). 2 C2H2-type zinc fingers span residues 649–672 (YFCECCEEIFPNEARYKKHVQSVH) and 677–700 (FTCSECGKSFKRLYFYDKHLKTVH).

It belongs to the Teflon family.

Its subcellular location is the nucleus. It localises to the chromosome. Specifically required in males for proper segregation of autosomal bivalents at meiosis I. Expression is required in the male germ line prior to spermatocyte stage S4. May have a role as a bridging molecule maintaining adhesion to hold autosome bivalents together via heterochromatic connections. This Drosophila persimilis (Fruit fly) protein is Protein teflon.